The chain runs to 257 residues: Peptide methionine sulfoxide reductase (257 aa).

The tract at residues 61–88 is disordered; sequence LGFGSRPQPDPAASSAIAQGPDDDVPSP. At S244 the chain carries Phosphoserine.

Belongs to the MsrA Met sulfoxide reductase family.

It carries out the reaction L-methionyl-[protein] + [thioredoxin]-disulfide + H2O = L-methionyl-(S)-S-oxide-[protein] + [thioredoxin]-dithiol. The enzyme catalyses [thioredoxin]-disulfide + L-methionine + H2O = L-methionine (S)-S-oxide + [thioredoxin]-dithiol. In terms of biological role, has an important function as a repair enzyme for proteins that have been inactivated by oxidation. Catalyzes the reversible oxidation-reduction of methionine sulfoxide in proteins to methionine. The protein is Peptide methionine sulfoxide reductase (PMSR) of Brassica napus (Rape).